A 424-amino-acid polypeptide reads, in one-letter code: Tyrosine--tRNA ligase (424 aa).

Tyr37 is an L-tyrosine binding site. Positions 42–51 (PTADSLHLGH) match the 'HIGH' region motif. Lys144 is subject to N6-acetyllysine. L-tyrosine is bound by residues Tyr175 and Gln179. The 'KMSKS' region signature appears at 235 to 239 (KFGKT). Position 238 (Lys238) interacts with ATP. The S4 RNA-binding domain maps to 357-414 (ADLMQALVDSELQPSRGQARKTIASNAITINGEKQSDPEYFFKEEDRLFGRFTLLRRG).

The protein belongs to the class-I aminoacyl-tRNA synthetase family. TyrS type 1 subfamily. As to quaternary structure, homodimer.

The protein localises to the cytoplasm. It carries out the reaction tRNA(Tyr) + L-tyrosine + ATP = L-tyrosyl-tRNA(Tyr) + AMP + diphosphate + H(+). Functionally, catalyzes the attachment of tyrosine to tRNA(Tyr) in a two-step reaction: tyrosine is first activated by ATP to form Tyr-AMP and then transferred to the acceptor end of tRNA(Tyr). The sequence is that of Tyrosine--tRNA ligase from Escherichia coli O127:H6 (strain E2348/69 / EPEC).